Here is a 486-residue protein sequence, read N- to C-terminus: Maintenance of mitochondrial morphology protein 1 (486 aa).

Residues 1–20 (MNFQQSAIPPFSFLLSFTQG) lie on the Lumenal side of the membrane. A helical transmembrane segment spans residues 21–41 (FLLGQLSVVLLIGAFIKFFIF). Residues 42-486 (GEAPPPPSRG…GSLPDGAVGN (445 aa)) lie on the Cytoplasmic side of the membrane. Disordered stretches follow at residues 70 to 96 (TNEA…SSST), 271 to 320 (TPPL…SPKS), and 387 to 486 (RTGV…AVGN). A compositionally biased stretch (polar residues) spans 83–96 (STSNVLRPVPSSST). One can recognise an SMP-LTD domain in the interval 128–379 (QPESLDWFNV…EPRVQVVGLP (252 aa)). Pro residues predominate over residues 271-282 (TPPLHTPSPSPA). Over residues 292–306 (QSQPENNSSNPNQQS) the composition is skewed to low complexity. Composition is skewed to polar residues over residues 398 to 407 (TGSNAASRSA) and 440 to 450 (DSVSRSSSFNV). Basic and acidic residues predominate over residues 460-474 (MTREDSRGAISDDFH).

The protein belongs to the MMM1 family. As to quaternary structure, homodimer. Component of the ER-mitochondria encounter structure (ERMES) or MDM complex, composed of mmm1, mdm10, mdm12 and mdm34. A mmm1 homodimer associates with one molecule of mdm12 on each side in a pairwise head-to-tail manner, and the SMP-LTD domains of mmm1 and mdm12 generate a continuous hydrophobic tunnel for phospholipid trafficking.

It is found in the endoplasmic reticulum membrane. Its function is as follows. Component of the ERMES/MDM complex, which serves as a molecular tether to connect the endoplasmic reticulum (ER) and mitochondria. Components of this complex are involved in the control of mitochondrial shape and protein biogenesis, and function in nonvesicular lipid trafficking between the ER and mitochondria. The mdm12-mmm1 subcomplex functions in the major beta-barrel assembly pathway that is responsible for biogenesis of all outer membrane beta-barrel proteins, and acts in a late step after the SAM complex. The mdm10-mdm12-mmm1 subcomplex further acts in the TOM40-specific pathway after the action of the mdm12-mmm1 complex. Essential for establishing and maintaining the structure of mitochondria and maintenance of mtDNA nucleoids. The protein is Maintenance of mitochondrial morphology protein 1 of Aspergillus terreus (strain NIH 2624 / FGSC A1156).